Here is a 423-residue protein sequence, read N- to C-terminus: MELGLALRLVAPPPRLPCRALQPPPMPCFSPCAARRSRIRSSRLERRVGVVVSGGSMASLAMEEEEEEEWEEAEEEAEGWQEEEAAVVTTRPRLELIEKPDRSLCLLDEYESEELGTSHCANHRSGYVAVLGKPNVGKSTLINQIVGQKLSIVTDKPQTTRHRILGICSEPEYQIILYDTPGVIKKEMHKLDTMMMKNVRSAVGSADCVLVVVDACKMPEKIDEILEEGVGNKDTELPVLLVLNKKDLIKPGEIAKKLEWYQKFTNADDVIPISAKFGHGVDDIKEWILSKLPLGPAYYPKDIASEHPERFFVGEIVREKIFLQYRQEIPYACQVNVISYKSRPTAKDFIQVEILVEKESQRSIILGKDGKAIKMLATASRLDIEDFLQKKVYLEIMVKVKENWRQDELLLKRYGYGGEIQAL.

Residues 1–60 (MELGLALRLVAPPPRLPCRALQPPPMPCFSPCAARRSRIRSSRLERRVGVVVSGGSMASL) constitute a chloroplast transit peptide. Residues 124–294 (RSGYVAVLGK…KEWILSKLPL (171 aa)) enclose the Era-type G domain. Positions 132 to 139 (GKPNVGKS) are G1. 132–139 (GKPNVGKS) serves as a coordination point for GTP. The G2 stretch occupies residues 158–162 (QTTRH). Residues 179–182 (DTPG) form a G3 region. GTP contacts are provided by residues 179–183 (DTPGV) and 244–247 (NKKD). The interval 244-247 (NKKD) is G4. A G5 region spans residues 273–275 (ISA). The KH type-2 domain maps to 325 to 402 (YRQEIPYACQ…YLEIMVKVKE (78 aa)).

This sequence belongs to the TRAFAC class TrmE-Era-EngA-EngB-Septin-like GTPase superfamily. Era GTPase family.

Its subcellular location is the plastid. It localises to the chloroplast stroma. The protein localises to the chloroplast nucleoid. Functionally, nuclear genome-encoded probable GTPase involved in ribosome biogenesis in chloroplasts. Plays a role in 16S rRNA maturation in plastids and may contribute to the assembly of the small (30S) ribosomal subunit. This Oryza sativa subsp. japonica (Rice) protein is GTPase ERA-like, chloroplastic.